The following is a 562-amino-acid chain: MAVFRSGLLVLTTPLASLVPRLAPILTSAARLVNHTLYVHLQPGMNLGGPAQPQSSPVQATFEVIDFITHLYAGADLHRHLDVRILLTNIRTKSFLPPLPSSVQNLAHPPEVVLTDFQTLDGSQYNPVKQQLERYATSCYSCCPQLSSVLLYPDYGPGMLPVQPLDVPLPSTIRPASPVARSAKQPVRGHQRGAVGGTFDRLHNAHKVLLSVACILAQEQLVVGVADKDLLKSKLLPELLQPYTERVEHLSEFLVDIKPSLSFDLIPLLDPYGPAGSDPSLEFLVVSEETYRGGMAVNRFRLENGLEELTLYQIQLLKDLNPKENEEDKVSSSSFRQQMLGNLLRPPHKRPELPPGCYVIGLTGISGSGKSSVAQRLKGLGAYVIDSDQLGHRSYAPGGPAYQPVVEAFGTDILHKDGTINRKVLGSRVFGNKKQLKILTDIVWPVIAKLAREEVDQAVAEGKRVCVIDAAVLLEAGWQNMVHEVWTVVIPETEAVRRIVERDGLSEAAAQSRLQSQMSGQQLVDQSHVVLSTLWEPHVTQRQVEKAWALLQKRISEAPSDP.

Phosphoserine is present on residues Ser177 and Ser182. The segment at 179 to 357 (VARSAKQPVR…HKRPELPPGC (179 aa)) is phosphopantetheine adenylyltransferase. In terms of domain architecture, DPCK spans 359–562 (VIGLTGISGS…KRISEAPSDP (204 aa)). 364–371 (GISGSGKS) provides a ligand contact to ATP.

The protein in the central section; belongs to the eukaryotic CoaD family. As to quaternary structure, monomer. Post-translationally, the N-terminus is blocked.

Its subcellular location is the cytoplasm. The protein resides in the mitochondrion matrix. The enzyme catalyses (R)-4'-phosphopantetheine + ATP + H(+) = 3'-dephospho-CoA + diphosphate. It carries out the reaction 3'-dephospho-CoA + ATP = ADP + CoA + H(+). It functions in the pathway cofactor biosynthesis; coenzyme A biosynthesis; CoA from (R)-pantothenate: step 4/5. It participates in cofactor biosynthesis; coenzyme A biosynthesis; CoA from (R)-pantothenate: step 5/5. Functionally, bifunctional enzyme that catalyzes the fourth and fifth sequential steps of CoA biosynthetic pathway. The fourth reaction is catalyzed by the phosphopantetheine adenylyltransferase, coded by the coaD domain; the fifth reaction is catalyzed by the dephospho-CoA kinase, coded by the coaE domain. May act as a point of CoA biosynthesis regulation. This is Bifunctional coenzyme A synthase from Sus scrofa (Pig).